A 212-amino-acid polypeptide reads, in one-letter code: MEKLNFLLKNTALLPTNLQKERLVQLVLLLNKWNKAYNLTSVRDPMEMLVKHILDSIVVSPYLQGNIFIDVGTGPGLPGLPLAIINPDKKFFLLDSLGKRISFIRNAVRELELTNVEPVLSRVEEFKPDHQFDGVLSRAFASLKDMTEWCQHLLTDQGFFYALKGQYNMEEVSALSAQFSVEKIIEMNVPELVGKRHLVLLKKIRINLMNYL.

Residues glycine 72, leucine 77, 123–124, and arginine 138 each bind S-adenosyl-L-methionine; that span reads VE.

This sequence belongs to the methyltransferase superfamily. RNA methyltransferase RsmG family.

It is found in the cytoplasm. The catalysed reaction is guanosine(527) in 16S rRNA + S-adenosyl-L-methionine = N(7)-methylguanosine(527) in 16S rRNA + S-adenosyl-L-homocysteine. In terms of biological role, specifically methylates the N7 position of guanine in position 527 of 16S rRNA. The protein is Ribosomal RNA small subunit methyltransferase G of Histophilus somni (strain 129Pt) (Haemophilus somnus).